The primary structure comprises 358 residues: Putative spore germination protein YfkT (358 aa).

10 helical membrane-spanning segments follow: residues 10–30 (LFFG…ILMI), 36–56 (NAWH…WLMH), 81–101 (IIIL…IRFF), 107–127 (ILFL…FVAI), 143–163 (IFLF…ATQI), 179–199 (LQSG…PLLF), 210–230 (IFAI…SISV), 262–282 (IIAA…LYIV), 297–317 (AMYT…FLNT), and 326–346 (IKPI…YLII).

This sequence belongs to the amino acid-polyamine-organocation (APC) superfamily. Spore germination protein (SGP) (TC 2.A.3.9) family.

The protein localises to the cell membrane. Its function is as follows. May be involved in spore germination. The sequence is that of Putative spore germination protein YfkT (yfkT) from Bacillus subtilis (strain 168).